Here is a 294-residue protein sequence, read N- to C-terminus: 2-methoxy-6-polyprenyl-1,4-benzoquinol methylase, mitochondrial (294 aa).

The transit peptide at 1–10 directs the protein to the mitochondrion; the sequence is MALRSAAGRL. S-adenosyl-L-methionine is bound by residues Thr-100, Asp-136, and 166-167; that span reads DA.

Belongs to the class I-like SAM-binding methyltransferase superfamily. MenG/UbiE family. In terms of assembly, component of a multi-subunit COQ enzyme complex.

It is found in the mitochondrion inner membrane. It carries out the reaction a 2-methoxy-6-(all-trans-polyprenyl)benzene-1,4-diol + S-adenosyl-L-methionine = a 5-methoxy-2-methyl-3-(all-trans-polyprenyl)benzene-1,4-diol + S-adenosyl-L-homocysteine + H(+). Its pathway is cofactor biosynthesis; ubiquinone biosynthesis. Methyltransferase required for the conversion of 2-polyprenyl-6-methoxy-1,4-benzoquinol (DDMQH2) to 2-polyprenyl-3-methyl-6-methoxy-1,4-benzoquinol (DMQH2). The chain is 2-methoxy-6-polyprenyl-1,4-benzoquinol methylase, mitochondrial from Oryza sativa subsp. japonica (Rice).